A 327-amino-acid chain; its full sequence is Cytochrome c biogenesis protein CcsA (327 aa).

The next 8 helical transmembrane spans lie at 13–33 (ISFS…LVNL), 46–66 (GIII…IYSG), 73–93 (LYES…VSYF), 101–121 (LNAI…SGLL), 145–165 (MILG…LLVI), 233–253 (IISL…VWAN), 262–282 (WDPK…YLHI), and 294–314 (AIVA…VNLL).

This sequence belongs to the CcmF/CycK/Ccl1/NrfE/CcsA family. As to quaternary structure, may interact with Ccs1.

It localises to the plastid. Its subcellular location is the chloroplast thylakoid membrane. Its function is as follows. Required during biogenesis of c-type cytochromes (cytochrome c6 and cytochrome f) at the step of heme attachment. The polypeptide is Cytochrome c biogenesis protein CcsA (Lobularia maritima (Sweet alyssum)).